A 126-amino-acid polypeptide reads, in one-letter code: Large ribosomal subunit protein bL12 (126 aa).

Belongs to the bacterial ribosomal protein bL12 family. Homodimer. Part of the ribosomal stalk of the 50S ribosomal subunit. Forms a multimeric L10(L12)X complex, where L10 forms an elongated spine to which 2 to 4 L12 dimers bind in a sequential fashion. Binds GTP-bound translation factors.

Forms part of the ribosomal stalk which helps the ribosome interact with GTP-bound translation factors. Is thus essential for accurate translation. This is Large ribosomal subunit protein bL12 from Geotalea daltonii (strain DSM 22248 / JCM 15807 / FRC-32) (Geobacter daltonii).